A 469-amino-acid polypeptide reads, in one-letter code: MVKTLYEKLFDSHIVYEAEGETPILYINRHLIHEVTSPQAFDGLRVANRQVRQVNKTFGTMDHSISTQVRDVNKLEGQAKIQVLELDKNTKATGIKLFDITTKEQGIVHVMGPEQGLTLPGMTIVCGDSHTATHGAFGALAFGIGTSEVEHVLATQTLKQARAKSMKIEVRGKVASGITAKDIILAIIGKTTMAGGTGHVVEFCGEAIRDLSMEGRMTVCNMAIEMGAKAGLIAPDETTFAYLKDRPHAPKGKDWDDAVAYWKTLQSDDDAQFDTVVTLEAKDIAPQVTWGTNPGQVISVNETIPNPQEMADLVQRASAEKALHYIGLEAGTNLKEVKVDQVFIGSCTNSRIEDLRAAAAVMKGRKKADNVKRILVVPGSGLVKEQAEKEGLDKIFIAAGAEWRNPGCSMCLGMNDDRLGEWERCASTSNRNFEGRQGRNGRTHLVSPAMAAAAGMFGKFVDIREVALN.

[4Fe-4S] cluster is bound by residues Cys347, Cys408, and Cys411.

Belongs to the aconitase/IPM isomerase family. LeuC type 1 subfamily. Heterodimer of LeuC and LeuD. The cofactor is [4Fe-4S] cluster.

It carries out the reaction (2R,3S)-3-isopropylmalate = (2S)-2-isopropylmalate. Its pathway is amino-acid biosynthesis; L-leucine biosynthesis; L-leucine from 3-methyl-2-oxobutanoate: step 2/4. Functionally, catalyzes the isomerization between 2-isopropylmalate and 3-isopropylmalate, via the formation of 2-isopropylmaleate. The sequence is that of 3-isopropylmalate dehydratase large subunit from Haemophilus influenzae (strain PittEE).